Reading from the N-terminus, the 212-residue chain is Agamous-like MADS-box protein MADS9 (212 aa).

The 61-residue stretch at 1 to 61 (MGRGKIEIKR…GKMHEYCSPS (61 aa)) folds into the MADS-box domain. The K-box domain occupies 84–170 (HENLNNELDR…NYIVHHQGMP (87 aa)).

In terms of tissue distribution, expressed during flower development in stamens and petals.

It localises to the nucleus. In terms of biological role, probable transcription factor that may play role in specifying stamen and petal organ identity. The chain is Agamous-like MADS-box protein MADS9 from Vitis vinifera (Grape).